The sequence spans 688 residues: Glycine--tRNA ligase beta subunit (688 aa).

Belongs to the class-II aminoacyl-tRNA synthetase family. As to quaternary structure, tetramer of two alpha and two beta subunits.

The protein localises to the cytoplasm. It carries out the reaction tRNA(Gly) + glycine + ATP = glycyl-tRNA(Gly) + AMP + diphosphate. The protein is Glycine--tRNA ligase beta subunit of Actinobacillus pleuropneumoniae serotype 7 (strain AP76).